The chain runs to 447 residues: ATP-dependent protease ATPase subunit HslU (447 aa).

Residues Ile18, 60–65 (GVGKTE), Asp259, Glu325, and Arg397 each bind ATP.

Belongs to the ClpX chaperone family. HslU subfamily. In terms of assembly, a double ring-shaped homohexamer of HslV is capped on each side by a ring-shaped HslU homohexamer. The assembly of the HslU/HslV complex is dependent on binding of ATP.

The protein localises to the cytoplasm. Its function is as follows. ATPase subunit of a proteasome-like degradation complex; this subunit has chaperone activity. The binding of ATP and its subsequent hydrolysis by HslU are essential for unfolding of protein substrates subsequently hydrolyzed by HslV. HslU recognizes the N-terminal part of its protein substrates and unfolds these before they are guided to HslV for hydrolysis. This is ATP-dependent protease ATPase subunit HslU from Burkholderia cenocepacia (strain HI2424).